The chain runs to 335 residues: Lipoyl synthase (335 aa).

Residues cysteine 55, cysteine 60, cysteine 66, cysteine 81, cysteine 85, cysteine 88, and serine 292 each contribute to the [4Fe-4S] cluster site. The Radical SAM core domain occupies 67–281 (WEDREATFLI…SKAAEEIGFL (215 aa)).

This sequence belongs to the radical SAM superfamily. Lipoyl synthase family. [4Fe-4S] cluster is required as a cofactor.

It localises to the cytoplasm. The catalysed reaction is [[Fe-S] cluster scaffold protein carrying a second [4Fe-4S](2+) cluster] + N(6)-octanoyl-L-lysyl-[protein] + 2 oxidized [2Fe-2S]-[ferredoxin] + 2 S-adenosyl-L-methionine + 4 H(+) = [[Fe-S] cluster scaffold protein] + N(6)-[(R)-dihydrolipoyl]-L-lysyl-[protein] + 4 Fe(3+) + 2 hydrogen sulfide + 2 5'-deoxyadenosine + 2 L-methionine + 2 reduced [2Fe-2S]-[ferredoxin]. Its pathway is protein modification; protein lipoylation via endogenous pathway; protein N(6)-(lipoyl)lysine from octanoyl-[acyl-carrier-protein]: step 2/2. In terms of biological role, catalyzes the radical-mediated insertion of two sulfur atoms into the C-6 and C-8 positions of the octanoyl moiety bound to the lipoyl domains of lipoate-dependent enzymes, thereby converting the octanoylated domains into lipoylated derivatives. This chain is Lipoyl synthase, found in Kocuria rhizophila (strain ATCC 9341 / DSM 348 / NBRC 103217 / DC2201).